Consider the following 387-residue polypeptide: ATP phosphoribosyltransferase regulatory subunit (387 aa).

The protein belongs to the class-II aminoacyl-tRNA synthetase family. HisZ subfamily. In terms of assembly, heteromultimer composed of HisG and HisZ subunits.

It is found in the cytoplasm. It participates in amino-acid biosynthesis; L-histidine biosynthesis; L-histidine from 5-phospho-alpha-D-ribose 1-diphosphate: step 1/9. In terms of biological role, required for the first step of histidine biosynthesis. May allow the feedback regulation of ATP phosphoribosyltransferase activity by histidine. This is ATP phosphoribosyltransferase regulatory subunit from Polynucleobacter asymbioticus (strain DSM 18221 / CIP 109841 / QLW-P1DMWA-1) (Polynucleobacter necessarius subsp. asymbioticus).